The chain runs to 631 residues: MBT domain-containing protein 1 (631 aa).

The tract at residues 1-31 (MFDGYDSCSEDTSSSSSSEESEEEVAPLPSN) is disordered. The FCS-type zinc finger occupies 45–80 (PDGKSGMATCEMCGMVGVRDAFYSKTKRFCSVSCSR). Zn(2+) contacts are provided by C54, C57, C74, and C78. Position 115 is an N6-acetyllysine (K115). MBT repeat units follow at residues 144–248 (FSWG…LVPP), 256–353 (TNWK…IGHR), 354–459 (FKRS…LTPP), and 467–563 (FKWF…LQPP). The tract at residues 563 to 631 (PASQSSRESQ…SATVYIKQEP (69 aa)) is disordered. Residues 564–576 (ASQSSRESQSASS) show a composition bias toward low complexity. Residues 577 to 593 (KQKKKAKSQQYKGHKKM) are compositionally biased toward basic residues.

As to quaternary structure, monomer. Component of the NuA4 histone acetyltransferase complex. Interacts with EPC1; interaction is direct and promotes recruitment of MBTD1 into the NuA4 histone acetyltransferase complex.

It localises to the nucleus. It is found in the chromosome. In terms of biological role, chromatin reader component of the NuA4 histone acetyltransferase complex, a multiprotein complex involved in transcriptional activation of select genes principally by acetylation of nucleosomal histones H4 and H2A. The NuA4 complex plays a direct role in repair of DNA double-strand breaks (DSBs) by promoting homologous recombination (HR). MBTD1 specifically recognizes and binds monomethylated and dimethylated 'Lys-20' on histone H4 (H4K20me1 and H4K20me2, respectively). In the NuA4 complex, MBTD1 promotes recruitment of the complex to H4K20me marks by competing with TP53BP1 for binding to H4K20me. Following recruitment to H4K20me at DNA breaks, the NuA4 complex catalyzes acetylation of 'Lys-15' on histone H2A (H2AK15), blocking the ubiquitination mark required for TP53BP1 localization at DNA breaks, thereby promoting homologous recombination (HR). The polypeptide is MBT domain-containing protein 1 (Mus musculus (Mouse)).